Here is a 1153-residue protein sequence, read N- to C-terminus: uncharacterized protein (1153 aa).

Disordered regions lie at residues 164 to 193, 224 to 245, 294 to 316, 332 to 427, 613 to 648, 683 to 703, 717 to 740, 772 to 819, 838 to 874, and 942 to 1106; these read TTIK…QIDD, DNYD…DDDK, KSPQ…QSKH, EHKL…KNKK, LSML…EGEN, QQQQ…EEMS, KSDD…SKRK, NKKL…KTIE, ASSG…EDEK, and NNNN…NNEV. Residues 169–179 are compositionally biased toward pro residues; the sequence is LPPPLPQPQPQ. Composition is skewed to low complexity over residues 231–240, 298–312, 336–391, and 399–423; these read NNNNNNNNSN, KLKL…QQQK, QQQQ…TPKK, and NNVN…NNNN. The segment covering 613 to 625 has biased composition (polar residues); sequence LSMLDSTNDGSSQ. A compositionally biased stretch (basic and acidic residues) spans 687–699; it reads QEKEKQQQEKQQD. A compositionally biased stretch (low complexity) spans 721 to 734; sequence NNNNNDNNNNNNNN. Over residues 772–784 the composition is skewed to basic and acidic residues; sequence NKKLRVDSEDQQT. Composition is skewed to low complexity over residues 788–808 and 839–854; these read TTTT…NNNN and SSGG…QNDS. Residues 856–874 show a composition bias toward basic and acidic residues; it reads TTKEKERSETIKTHNEDEK. Residues 942 to 987 are compositionally biased toward low complexity; sequence NNNNNNNNNINNINNIGNKNTTVNNSNHSNHSNNNINNNNIFKNSN. Composition is skewed to polar residues over residues 988–998 and 1005–1015; these read PIVDTNFSSTT and QSKIFTGNQLP. Positions 1019-1059 are enriched in low complexity; the sequence is INNENVVNNNNNNEINNTTTTTTNNNSGIHKNNNNYNSDNS. Residues 1064–1081 are compositionally biased toward basic and acidic residues; the sequence is DGLKQEKEEQKEEQKENK. Residues 1082–1105 show a composition bias toward low complexity; it reads NNNNNNNNNNNNNNNNNNNNNNNE.

This is an uncharacterized protein from Dictyostelium discoideum (Social amoeba).